The sequence spans 266 residues: MAGVKKNRSPRKPTKLLQSRLKFAHSSATLKKCTECQMSYIIDSPADCAEHKKYHDLHLYGKKWLASWGTAIQDTCSSQYITPPSTSGGNASGNGAKADREDYIVYITPGKTAEVKAMMEIMYIVNNELTAPHDENDFWSEEGTSSMGRAFVYIKDGRAVGAITVEYLKEDDSRGRWMRVSTRELVPEVVPRVRLGISRIWVCRKQRGQGIATRLLECVRKYAILGNEVARWEMAWSQPSESGGKLATRYNSVRHKSGELLIPCYI.

A CCHH-type zinc finger spans residues 31–55 (KKCTECQMSYIIDSPADCAEHKKYH). The region spanning 108–266 (TPGKTAEVKA…SGELLIPCYI (159 aa)) is the N-acetyltransferase domain.

This sequence belongs to the acetyltransferase family. ECO subfamily.

The protein localises to the nucleus. In terms of biological role, probable acetyltransferase required for the establishment of sister chromatid cohesion and couple the processes of cohesion and DNA replication to ensure that only sister chromatids become paired together. In contrast to the structural cohesins, the deposition and establishment factors are required only during S phase. Acts by acetylating the cohesin complex component SMC3. The chain is N-acetyltransferase ECO1 (ECO1) from Eremothecium gossypii (strain ATCC 10895 / CBS 109.51 / FGSC 9923 / NRRL Y-1056) (Yeast).